The sequence spans 406 residues: Succinylornithine transaminase (406 aa).

Lys252 is modified (N6-(pyridoxal phosphate)lysine).

This sequence belongs to the class-III pyridoxal-phosphate-dependent aminotransferase family. AstC subfamily. It depends on pyridoxal 5'-phosphate as a cofactor.

The catalysed reaction is N(2)-succinyl-L-ornithine + 2-oxoglutarate = N-succinyl-L-glutamate 5-semialdehyde + L-glutamate. Its pathway is amino-acid degradation; L-arginine degradation via AST pathway; L-glutamate and succinate from L-arginine: step 3/5. In terms of biological role, catalyzes the transamination of N(2)-succinylornithine and alpha-ketoglutarate into N(2)-succinylglutamate semialdehyde and glutamate. Can also act as an acetylornithine aminotransferase. The polypeptide is Succinylornithine transaminase (Escherichia coli O157:H7).